Here is a 603-residue protein sequence, read N- to C-terminus: Geraniol synthase, chloroplastic (603 aa).

Residues 1–50 (MALQMIAPFLSSFLPNPRHSLAAHGLTHQKCVSKHISCSTTTPTYSTTVP) constitute a chloroplast transit peptide. Arg-301, Asp-338, Asp-342, Arg-479, and Asp-482 together coordinate (2E)-geranyl diphosphate. 2 residues coordinate Mg(2+): Asp-338 and Asp-342. The DDXXD motif signature appears at 338–342 (DDIYD). Mg(2+) is bound by residues Asp-482, Thr-486, and Glu-490.

The protein belongs to the terpene synthase family. Tpsb subfamily. Homodimer. Mg(2+) is required as a cofactor. Mn(2+) serves as cofactor. In terms of tissue distribution, expressed in the oil cells of the leaves.

The protein localises to the plastid. Its subcellular location is the chloroplast. The catalysed reaction is (2E)-geranyl diphosphate + H2O = (2E)-geraniol + diphosphate. Its pathway is secondary metabolite biosynthesis; terpenoid biosynthesis. Monoterpene synthase that catalyzes the formation of geraniol from geranyl diphosphate. The chain is Geraniol synthase, chloroplastic (GerS) from Cinnamomum tenuipile (Alseodaphne mollis).